We begin with the raw amino-acid sequence, 972 residues long: MASNNVAQFAAELKMPAGVLLEQLQAAGVQKASEDDALSETDKARLLDHLRKSHGATDGDKRKITLTRKHTSEIKQSDATGKARTIQVEVRKKRTFVKRDDVSEGAEQGQAQVAEADDDAELKRREEEARREADLLEKQAQELRERQERLEREEAERRAREEAAEAERRRAEEEAAAKRVAAEAAAAQQQAAAQQAAAAEQQEAASTQSAQDEARAAAERAAQREAAKKAEDAAREAADKARAEQEEISKRRAAAEAEARAIREMMNTPRKAVVKAVEPPKPVEPPKPAEAKGTLHKPAKPEGAQARPAVKKPAGAAAPATTAPAGAGDRNKKPGAGKGGWQDDASKRRGIKTRGDSSGGVDRGWRGGPKGRGRHQDSSTFQAPTEPIVREVHVPETVSVADLAHKMSVKASEVIKVMMKMGQMVTINQVLDQETAMIIVEELGHRAVAAKLDDPEALLVEGETGTDAEQLPRPPVVTVMGHVDHGKTSLLDHIRRAKVAAGEAGGITQHIGAYHVDTPRGVITFLDTPGHEAFTAMRARGAKATDIVVLVVAADDGVMPQTKEAIAHAKAGGVPIVVAINKIDKPDANLDRVKQELVAEGVVPEEYGGDSPFVPVSAKTGAGIDDLLENVLLQAEVLELKAPVEAPAKGIVIEAKLDKGKGPVATILVQAGTLNRGDIVLAGTAYGRVRAMLDENGKPTKEAGPSIPVEIQGLSEVPGAGEEVIVLPDERKAREIALFRQGKFRDVKLAKQQAAKLESMLEQMGEGEVQNLPLIIKADVQGSQEALVQSLLKLSTDEVRVQIVHSAVGGISENDVNLATASKAVIIGFNTRADAQARKLAESNGIDIRYYNIIYDAVDEVKAAMSGMLAPEKREVITGMVEVRQVFKVPKIGAVAGCMVTDGIVKRSSSVRVLRNNVVIFTGELESLKRFKDDVKEVKQGFECGMSVKNFNDIVEGDQFEVFEVTEVARTL.

The span at 48-63 (DHLRKSHGATDGDKRK) shows a compositional bias: basic and acidic residues. 2 disordered regions span residues 48–85 (DHLRKSHGATDGDKRKITLTRKHTSEIKQSDATGKART) and 99–385 (RDDV…QAPT). Residues 105–114 (GAEQGQAQVA) are compositionally biased toward low complexity. A compositionally biased stretch (basic and acidic residues) spans 121–181 (ELKRREEEAR…EEEAAAKRVA (61 aa)). Low complexity predominate over residues 182–205 (AEAAAAQQQAAAQQAAAAEQQEAA). The span at 212–263 (DEARAAAERAAQREAAKKAEDAAREAADKARAEQEEISKRRAAAEAEARAIR) shows a compositional bias: basic and acidic residues. The segment covering 279-288 (PPKPVEPPKP) has biased composition (pro residues). The segment covering 313–328 (PAGAAAPATTAPAGAG) has biased composition (low complexity). Residues 357 to 370 (SSGGVDRGWRGGPK) are compositionally biased toward gly residues. The tr-type G domain maps to 472 to 641 (PRPPVVTVMG…LLQAEVLELK (170 aa)). The tract at residues 481–488 (GHVDHGKT) is G1. GTP is bound at residue 481 to 488 (GHVDHGKT). Positions 506–510 (GITQH) are G2. Residues 527 to 530 (DTPG) are G3. GTP is bound by residues 527-531 (DTPGH) and 581-584 (NKID). The tract at residues 581-584 (NKID) is G4. The G5 stretch occupies residues 617–619 (SAK).

The protein belongs to the TRAFAC class translation factor GTPase superfamily. Classic translation factor GTPase family. IF-2 subfamily.

The protein resides in the cytoplasm. Functionally, one of the essential components for the initiation of protein synthesis. Protects formylmethionyl-tRNA from spontaneous hydrolysis and promotes its binding to the 30S ribosomal subunits. Also involved in the hydrolysis of GTP during the formation of the 70S ribosomal complex. The protein is Translation initiation factor IF-2 of Burkholderia lata (strain ATCC 17760 / DSM 23089 / LMG 22485 / NCIMB 9086 / R18194 / 383).